Reading from the N-terminus, the 117-residue chain is Type II secretion system protein I (117 aa).

The propeptide at 1-6 is leader sequence; the sequence is MKSKRG. Phe7 bears the N-methylphenylalanine mark. A helical transmembrane segment spans residues 7–27; sequence FTLLEVLVALAIFATAAISVI.

The protein belongs to the GSP I family. As to quaternary structure, type II secretion is composed of four main components: the outer membrane complex, the inner membrane complex, the cytoplasmic secretion ATPase and the periplasm-spanning pseudopilus. Interacts with core component EpsG. In terms of processing, cleaved by prepilin peptidase. Methylated by prepilin peptidase at the amino group of the N-terminal phenylalanine once the leader sequence is cleaved by prepilin peptidase.

It localises to the cell inner membrane. Functionally, component of the type II secretion system required for the energy-dependent secretion of extracellular factors such as proteases and toxins from the periplasm. Part of the pseudopilus tip complex that is critical for the recognition and binding of secretion substrates. The chain is Type II secretion system protein I (epsI) from Vibrio cholerae serotype O1 (strain ATCC 39315 / El Tor Inaba N16961).